Reading from the N-terminus, the 75-residue chain is Conotoxin Vn5.6 (75 aa).

An N-terminal signal peptide occupies residues 1-19; the sequence is MLCLPVFIILLLLASPAAP. A propeptide spanning residues 20–59 is cleaved from the precursor; that stretch reads NPLEKRIQSDLIRAALEDADMKTGEREILNIIDSISDVAK. Q60 is modified (pyrrolidone carboxylic acid).

Belongs to the conotoxin T superfamily. Contains 2 disulfide bonds that can be either 'C1-C3, C2-C4' or 'C1-C4, C2-C3', since these disulfide connectivities have been observed for conotoxins with cysteine framework V (for examples, see AC P0DQQ7 and AC P81755). In terms of tissue distribution, expressed by the venom duct.

It localises to the secreted. The protein is Conotoxin Vn5.6 of Conus ventricosus (Mediterranean cone).